The primary structure comprises 261 residues: Hemin import ATP-binding protein HmuV (261 aa).

The region spanning 7–243 is the ABC transporter domain; it reads LRGQNLSLQF…EIIDAVYGYK (237 aa). 39–46 is an ATP binding site; the sequence is GPNGAGKS.

This sequence belongs to the ABC transporter superfamily. Heme (hemin) importer (TC 3.A.1.14.5) family. As to quaternary structure, the complex is composed of two ATP-binding proteins (HmuV), two transmembrane proteins (HmuU) and a solute-binding protein (HmuT).

The protein localises to the cell inner membrane. Functionally, part of the ABC transporter complex HmuTUV involved in hemin import. Responsible for energy coupling to the transport system. This chain is Hemin import ATP-binding protein HmuV, found in Vibrio vulnificus (strain YJ016).